The following is a 241-amino-acid chain: Uracil-DNA glycosylase (241 aa).

Residue Asp68 is the Proton acceptor of the active site.

Belongs to the uracil-DNA glycosylase (UDG) superfamily. UNG family.

The protein localises to the cytoplasm. The enzyme catalyses Hydrolyzes single-stranded DNA or mismatched double-stranded DNA and polynucleotides, releasing free uracil.. Its function is as follows. Excises uracil residues from the DNA which can arise as a result of misincorporation of dUMP residues by DNA polymerase or due to deamination of cytosine. In Sinorhizobium medicae (strain WSM419) (Ensifer medicae), this protein is Uracil-DNA glycosylase.